The following is a 160-amino-acid chain: Transcriptional repressor NrdR (160 aa).

The span at 1 to 11 shows a compositional bias: polar residues; that stretch reads MRCPNCNSLDT. A disordered region spans residues 1-20; sequence MRCPNCNSLDTQVKDSRPTE. Residues 3–34 fold into a zinc finger; it reads CPNCNSLDTQVKDSRPTEDSSVIRRRRVCIAC. The ATP-cone domain maps to 49 to 139; the sequence is LTVIKRNGRR…VYRNFREAKD (91 aa).

This sequence belongs to the NrdR family. It depends on Zn(2+) as a cofactor.

In terms of biological role, negatively regulates transcription of bacterial ribonucleotide reductase nrd genes and operons by binding to NrdR-boxes. This chain is Transcriptional repressor NrdR, found in Rhodopseudomonas palustris (strain HaA2).